A 296-amino-acid polypeptide reads, in one-letter code: Phosphatidylglycerol--prolipoprotein diacylglyceryl transferase (296 aa).

3 consecutive transmembrane segments (helical) span residues 17–37 (LAVRWYGLMYLVGFILAIVVG), 59–79 (MMFYGVLGVVLGGRLGYVLFY), and 97–117 (GGMSFHGGFLGVTLAMALFAW). Residue Arg142 participates in a 1,2-diacyl-sn-glycero-3-phospho-(1'-sn-glycerol) binding. Transmembrane regions (helical) follow at residues 230–250 (MGAISALFLIGYGAARFTVEF) and 265–285 (LSMGQWLSLPMIVAGVLMMIW).

This sequence belongs to the Lgt family.

The protein localises to the cell inner membrane. The catalysed reaction is L-cysteinyl-[prolipoprotein] + a 1,2-diacyl-sn-glycero-3-phospho-(1'-sn-glycerol) = an S-1,2-diacyl-sn-glyceryl-L-cysteinyl-[prolipoprotein] + sn-glycerol 1-phosphate + H(+). It functions in the pathway protein modification; lipoprotein biosynthesis (diacylglyceryl transfer). Catalyzes the transfer of the diacylglyceryl group from phosphatidylglycerol to the sulfhydryl group of the N-terminal cysteine of a prolipoprotein, the first step in the formation of mature lipoproteins. This Burkholderia mallei (strain NCTC 10247) protein is Phosphatidylglycerol--prolipoprotein diacylglyceryl transferase.